The sequence spans 85 residues: UPF0291 protein SpyM3_1470 (85 aa).

The disordered stretch occupies residues 62–85; sequence TPEKLRQVQREKGLHGRSLDDPKS.

Belongs to the UPF0291 family.

The protein localises to the cytoplasm. This is UPF0291 protein SpyM3_1470 from Streptococcus pyogenes serotype M3 (strain ATCC BAA-595 / MGAS315).